The primary structure comprises 197 residues: Small ribosomal subunit protein uS4B (197 aa).

One can recognise an S4 RNA-binding domain in the interval Ser-88–Asn-150.

It belongs to the universal ribosomal protein uS4 family. As to quaternary structure, part of the 30S ribosomal subunit. Contacts protein S5. The interaction surface between S4 and S5 is involved in control of translational fidelity.

Functionally, one of the primary rRNA binding proteins, it binds directly to 16S rRNA where it nucleates assembly of the body of the 30S subunit. With S5 and S12 plays an important role in translational accuracy. This Clostridium perfringens (strain 13 / Type A) protein is Small ribosomal subunit protein uS4B (rpsD2).